A 215-amino-acid chain; its full sequence is N-(5'-phosphoribosyl)anthranilate isomerase (215 aa).

This sequence belongs to the TrpF family.

It carries out the reaction N-(5-phospho-beta-D-ribosyl)anthranilate = 1-(2-carboxyphenylamino)-1-deoxy-D-ribulose 5-phosphate. Its pathway is amino-acid biosynthesis; L-tryptophan biosynthesis; L-tryptophan from chorismate: step 3/5. The chain is N-(5'-phosphoribosyl)anthranilate isomerase from Paramagnetospirillum magneticum (strain ATCC 700264 / AMB-1) (Magnetospirillum magneticum).